Reading from the N-terminus, the 496-residue chain is 3-octaprenyl-4-hydroxybenzoate carboxy-lyase (496 aa).

Asn-181 lines the Mn(2+) pocket. Prenylated FMN is bound by residues 184–186, 198–200, and 203–204; these read IYR, RWL, and RG. Glu-247 lines the Mn(2+) pocket. Asp-296 (proton donor) is an active-site residue.

This sequence belongs to the UbiD family. Homohexamer. The cofactor is prenylated FMN. Requires Mn(2+) as cofactor.

Its subcellular location is the cell membrane. The catalysed reaction is a 4-hydroxy-3-(all-trans-polyprenyl)benzoate + H(+) = a 2-(all-trans-polyprenyl)phenol + CO2. It participates in cofactor biosynthesis; ubiquinone biosynthesis. In terms of biological role, catalyzes the decarboxylation of 3-octaprenyl-4-hydroxy benzoate to 2-octaprenylphenol, an intermediate step in ubiquinone biosynthesis. The chain is 3-octaprenyl-4-hydroxybenzoate carboxy-lyase from Azoarcus sp. (strain BH72).